The sequence spans 444 residues: Endoglucanase N (444 aa).

An N-terminal signal peptide occupies residues 1–31 (MWMRRNQIVRKLTLGVVTTVLGMSLSFSALS). Residues His-64, 68–69 (WF), Tyr-95, and His-130 contribute to the substrate site. Glu-168 functions as the Proton donor in the catalytic mechanism. Tyr-230 is a substrate binding site. Glu-256 serves as the catalytic Nucleophile. Substrate is bound by residues 262-263 (AS), Trp-290, and 295-297 (KSE). The disordered stretch occupies residues 332–358 (ANLGGGDTPTTPTTPTEPTNPGNGTTG). Low complexity predominate over residues 339 to 358 (TPTTPTTPTEPTNPGNGTTG). The 89-residue stretch at 356–444 (TTGDVVLQYR…DKANRYVLVT (89 aa)) folds into the CBM3 domain.

It belongs to the glycosyl hydrolase 5 (cellulase A) family.

The protein resides in the secreted. It catalyses the reaction Endohydrolysis of (1-&gt;4)-beta-D-glucosidic linkages in cellulose, lichenin and cereal beta-D-glucans.. This is Endoglucanase N (celN) from Pectobacterium atrosepticum (Erwinia carotovora subsp. atroseptica).